The chain runs to 408 residues: Phosphoglycerate kinase (408 aa).

Residues 24–26 (DLN), Arg-40, 63–66 (HLGR), Arg-122, and Arg-166 each bind substrate. Residues Lys-216, Gly-304, Glu-335, and 364–367 (GGDS) each bind ATP.

Belongs to the phosphoglycerate kinase family. In terms of assembly, monomer.

The protein localises to the cytoplasm. The catalysed reaction is (2R)-3-phosphoglycerate + ATP = (2R)-3-phospho-glyceroyl phosphate + ADP. It functions in the pathway carbohydrate degradation; glycolysis; pyruvate from D-glyceraldehyde 3-phosphate: step 2/5. This Mycolicibacterium smegmatis (strain ATCC 700084 / mc(2)155) (Mycobacterium smegmatis) protein is Phosphoglycerate kinase.